We begin with the raw amino-acid sequence, 253 residues long: CD151 antigen (253 aa).

The Cytoplasmic portion of the chain corresponds to Met1–Tyr18. Residues Cys11 and Cys15 are each lipidated (S-palmitoyl cysteine). Residues Leu19–Ile39 traverse the membrane as a helical segment. Over Trp40–Tyr57 the chain is Extracellular. The chain crosses the membrane as a helical span at residues Leu58 to Gly78. Residues Cys79–Arg91 are Cytoplasmic-facing. Residues Leu92–Tyr112 traverse the membrane as a helical segment. Topologically, residues Val113–Arg221 are extracellular. An N-linked (GlcNAc...) asparagine glycan is attached at Asn159. A helical transmembrane segment spans residues Val222 to Cys242. Residues Cys242 and Cys243 are each lipidated (S-palmitoyl cysteine). At Cys243–Tyr253 the chain is on the cytoplasmic side.

It belongs to the tetraspanin (TM4SF) family. In terms of assembly, interacts with integrins ITGA3:ITGB1, ITGA5:ITGB1, ITGA3:ITGB1 and ITGA6:ITGB4 and with CD9 and CD181. Interacts (via the second extracellular domain) with integrin ITGAV:ITGB3. Interacts with ITGA3; this interaction modulates ITGA3 glycosylation pattern. Interacts with F11R. Interacts with RAC1 and CDC42; these interactions mediate physical association of RAC1 and CDC42 with integrin adhesion receptor complexes. Post-translationally, palmitoylated. Palmitoylation by ZDHHC2 regulates CD151 expression, association with other tetraspanin family proteins and function in cell adhesion. In terms of processing, ubiquitinated by RNF128 on lysine residues present in the tetraspanin amino terminus via 'Lys-48'-linked ubiquitin leading to proteasomal degradation.

Its subcellular location is the cell membrane. Its function is as follows. Structural component of specialized membrane microdomains known as tetraspanin-enriched microdomains (TERMs), which act as platforms for receptor clustering and signaling. Plays a role in various cellular and molecular mechanism through its association with both integrin and non-integrin proteins. These interactions facilitate critical cellular functions, including cell-to-cell communication, wound healing, platelet aggregation, trafficking, cell motility, and angiogenesis. Via interaction with JAM-A/F11R and integrin ITGA3:ITGB1, promotes the recruitment of signaling molecules such as RAC1, CDC42 and RhoGTPases to facilitate the polarization of epithelial cells and the reorganization of the actin cytoskeleton, which are critical steps in cell migration process. Regulates the glycosylation pattern of ITGA3:ITGB1 thereby modulating its activity. Plays an essential role in the maintenance of central laminin-binding integrin ITGA6:ITGB4-containing adhesion complexes. Essential for the proper assembly of the glomerular and tubular basement membranes in kidney. Contributes to T-cell activation by modulating integrin signaling leading to activation of downstream targets PTK2 and MAPK1/MAPK3. The polypeptide is CD151 antigen (CD151) (Chlorocebus aethiops (Green monkey)).